A 239-amino-acid chain; its full sequence is MTVEWLAEQLKEHNIQLTETQKQQFQTYYRLLVEWNEKMNLTSITDEHDVYLKHFYDSIAPSFYFDFNQPISICDVGAGAGFPSIPLKIMFPQLKVTIVDSLNKRIQFLNHLASELQLQDVSFIHDRAETFGKGVYRESYDVVTARAVARLSVLSELCLPLVKKGGQFVALKSSKGEEELEEAKFAISVLGGNVTETHTFELPEDAGERQMFIIDKKRQTPKKYPRKPGTPNKTPLLEK.

S-adenosyl-L-methionine is bound by residues Gly77, Phe82, 128-129 (AE), and Arg146. A disordered region spans residues 215-239 (DKKRQTPKKYPRKPGTPNKTPLLEK).

This sequence belongs to the methyltransferase superfamily. RNA methyltransferase RsmG family.

The protein resides in the cytoplasm. In terms of biological role, specifically methylates the N7 position of guanine in position 535 of 16S rRNA. The chain is Ribosomal RNA small subunit methyltransferase G from Staphylococcus aureus (strain USA300).